A 375-amino-acid polypeptide reads, in one-letter code: All-trans-retinol dehydrogenase [NAD(+)] ADH1B (375 aa).

Serine 2 bears the N-acetylserine mark. Residue serine 23 is modified to Phosphoserine. Tyrosine 35 is subject to Phosphotyrosine. Zn(2+) is bound by residues cysteine 47, histidine 68, cysteine 98, cysteine 101, cysteine 104, cysteine 112, and cysteine 175. Residues 200-205 (GLGGVG), aspartate 224, lysine 229, 293-295 (VGV), and arginine 370 each bind NAD(+).

The protein belongs to the zinc-containing alcohol dehydrogenase family. As to quaternary structure, homodimer or heterodimer of closely related subunits. The cofactor is Zn(2+).

The protein resides in the cytoplasm. It carries out the reaction all-trans-retinol + NAD(+) = all-trans-retinal + NADH + H(+). It catalyses the reaction all-trans-4-hydroxyretinol + NAD(+) = all-trans-4-hydroxyretinal + NADH + H(+). The catalysed reaction is all-trans-4-oxoretinol + NAD(+) = all-trans-4-oxoretinal + NADH + H(+). Functionally, catalyzes the NAD-dependent oxidation of all-trans-retinol and its derivatives such as all-trans-4-hydroxyretinol and may participate in retinoid metabolism. In vitro can also catalyze the NADH-dependent reduction of all-trans-retinal and its derivatives such as all-trans-4-oxoretinal. Catalyzes in the oxidative direction with higher efficiency. Has the same affinity for all-trans-4-hydroxyretinol and all-trans-4-oxoretinal. In Pan troglodytes (Chimpanzee), this protein is All-trans-retinol dehydrogenase [NAD(+)] ADH1B.